The primary structure comprises 424 residues: UDP-N-acetylglucosamine 1-carboxyvinyltransferase (424 aa).

Phosphoenolpyruvate is bound at residue 22 to 23 (KN). UDP-N-acetyl-alpha-D-glucosamine is bound at residue arginine 93. Cysteine 117 (proton donor) is an active-site residue. Cysteine 117 carries the post-translational modification 2-(S-cysteinyl)pyruvic acid O-phosphothioketal. UDP-N-acetyl-alpha-D-glucosamine-binding positions include 122-126 (RPIDL), aspartate 307, and isoleucine 329.

Belongs to the EPSP synthase family. MurA subfamily.

It is found in the cytoplasm. The enzyme catalyses phosphoenolpyruvate + UDP-N-acetyl-alpha-D-glucosamine = UDP-N-acetyl-3-O-(1-carboxyvinyl)-alpha-D-glucosamine + phosphate. Its pathway is cell wall biogenesis; peptidoglycan biosynthesis. Its function is as follows. Cell wall formation. Adds enolpyruvyl to UDP-N-acetylglucosamine. This chain is UDP-N-acetylglucosamine 1-carboxyvinyltransferase, found in Chlorobium phaeovibrioides (strain DSM 265 / 1930) (Prosthecochloris vibrioformis (strain DSM 265)).